The following is a 328-amino-acid chain: tRNA dimethylallyltransferase (328 aa).

23–30 (GPTASGKS) provides a ligand contact to ATP. Residue 25 to 30 (TASGKS) participates in substrate binding. The segment at 48–51 (DSMQ) is interaction with substrate tRNA.

Belongs to the IPP transferase family. In terms of assembly, monomer. Mg(2+) is required as a cofactor.

It carries out the reaction adenosine(37) in tRNA + dimethylallyl diphosphate = N(6)-dimethylallyladenosine(37) in tRNA + diphosphate. Its function is as follows. Catalyzes the transfer of a dimethylallyl group onto the adenine at position 37 in tRNAs that read codons beginning with uridine, leading to the formation of N6-(dimethylallyl)adenosine (i(6)A). The chain is tRNA dimethylallyltransferase from Rhodopseudomonas palustris (strain BisA53).